Consider the following 901-residue polypeptide: Probable inorganic carbon transporter subunit DabA (901 aa).

Zn(2+) contacts are provided by Cys424, Asp426, His606, and Cys621.

This sequence belongs to the inorganic carbon transporter (TC 9.A.2) DabA family. As to quaternary structure, forms a complex with DabB. Zn(2+) is required as a cofactor.

The protein resides in the cell membrane. In terms of biological role, part of an energy-coupled inorganic carbon pump. The protein is Probable inorganic carbon transporter subunit DabA of Staphylococcus aureus (strain MRSA252).